The sequence spans 239 residues: UDP-2,3-diacylglucosamine hydrolase (239 aa).

Residues Asp8, His10, Asp41, Asn78, and His113 each coordinate Mn(2+). Residue 78–79 (NR) coordinates substrate. 5 residues coordinate substrate: Asp121, Ser159, Asn163, Lys166, and His194. Positions 194 and 196 each coordinate Mn(2+).

This sequence belongs to the LpxH family. It depends on Mn(2+) as a cofactor.

It is found in the cell inner membrane. The catalysed reaction is UDP-2-N,3-O-bis[(3R)-3-hydroxytetradecanoyl]-alpha-D-glucosamine + H2O = 2-N,3-O-bis[(3R)-3-hydroxytetradecanoyl]-alpha-D-glucosaminyl 1-phosphate + UMP + 2 H(+). It functions in the pathway glycolipid biosynthesis; lipid IV(A) biosynthesis; lipid IV(A) from (3R)-3-hydroxytetradecanoyl-[acyl-carrier-protein] and UDP-N-acetyl-alpha-D-glucosamine: step 4/6. Its function is as follows. Hydrolyzes the pyrophosphate bond of UDP-2,3-diacylglucosamine to yield 2,3-diacylglucosamine 1-phosphate (lipid X) and UMP by catalyzing the attack of water at the alpha-P atom. Involved in the biosynthesis of lipid A, a phosphorylated glycolipid that anchors the lipopolysaccharide to the outer membrane of the cell. The polypeptide is UDP-2,3-diacylglucosamine hydrolase (Shewanella oneidensis (strain ATCC 700550 / JCM 31522 / CIP 106686 / LMG 19005 / NCIMB 14063 / MR-1)).